We begin with the raw amino-acid sequence, 133 residues long: ATP synthase epsilon chain (133 aa).

The protein belongs to the ATPase epsilon chain family. In terms of assembly, F-type ATPases have 2 components, CF(1) - the catalytic core - and CF(0) - the membrane proton channel. CF(1) has five subunits: alpha(3), beta(3), gamma(1), delta(1), epsilon(1). CF(0) has three main subunits: a, b and c.

Its subcellular location is the cell membrane. In terms of biological role, produces ATP from ADP in the presence of a proton gradient across the membrane. This chain is ATP synthase epsilon chain (atpC), found in Mycoplasma genitalium (strain ATCC 33530 / DSM 19775 / NCTC 10195 / G37) (Mycoplasmoides genitalium).